A 339-amino-acid polypeptide reads, in one-letter code: GATA transcription factor 5 (339 aa).

4 disordered regions span residues 68 to 88, 126 to 145, 163 to 206, and 221 to 242; these read MVRVSSEEPNDDGDALRRSSD, EYSGPNLTGTPTEKPAWLTG, PVPA…PSSP, and ERPPFPKKHKKRSAESVFSGEL. The span at 126-136 shows a compositional bias: polar residues; the sequence is EYSGPNLTGTP. The Nuclear localization signal motif lies at 167-174; sequence KARSKRNR. The span at 181–206 shows a compositional bias: low complexity; it reads SLGSSSSSGPSSSGSTSSSSSGPSSP. The segment at 245–299 adopts a GATA-type zinc-finger fold; sequence LQPQRKCSHCGVQKTPQWRAGPMGAKTLCNACGVRYKSGRLLPEYRPACSPTFSS. The tract at residues 314 to 339 is disordered; sequence RKKEPTSDNETGLNQLVQSPQAVPSF. Over residues 321–339 the composition is skewed to polar residues; that stretch reads DNETGLNQLVQSPQAVPSF.

Belongs to the type IV zinc-finger family. Class A subfamily.

The protein resides in the nucleus. Transcriptional activator that specifically binds 5'-GATA-3' or 5'-GAT-3' motifs within gene promoters. May be involved in the regulation of some light-responsive genes. The sequence is that of GATA transcription factor 5 (GATA5) from Arabidopsis thaliana (Mouse-ear cress).